The primary structure comprises 430 residues: Uric acid permease PucK (430 aa).

The next 14 membrane-spanning stretches (helical) occupy residues 18 to 38 (MLAM…AIGL), 43 to 63 (LTYL…LQLW), 67 to 87 (YFGI…GPMI), 97 to 117 (AIYG…GFFG), 122 to 142 (FFPP…LIPT), 163 to 183 (LLGF…KGFI), 185 to 205 (SIAI…MGKV), 209 to 229 (EVLE…PPTF), 233 to 253 (AVVT…GVYF), 274 to 294 (AEGL…TAFS), 310 to 330 (VIAI…AAAL), 333 to 353 (VIPT…VISY), 369 to 389 (LLII…PALF), and 398 to 418 (VLAG…HAFF).

It belongs to the nucleobase:cation symporter-2 (NCS2) (TC 2.A.40) family.

Its subcellular location is the cell membrane. Its function is as follows. Uptake of uric acid. In Bacillus subtilis (strain 168), this protein is Uric acid permease PucK (pucK).